The chain runs to 333 residues: Probable pyridoxal reductase 2 (333 aa).

The Proton donor role is filled by Y52.

It belongs to the aldo/keto reductase family.

It is found in the cytoplasm. It catalyses the reaction pyridoxine + NADP(+) = pyridoxal + NADPH + H(+). Its function is as follows. Catalyzes the reduction of pyridoxal (PL) with NADPH and oxidation of pyridoxine (PN) with NADP(+). This chain is Probable pyridoxal reductase 2, found in Schizosaccharomyces pombe (strain 972 / ATCC 24843) (Fission yeast).